A 961-amino-acid chain; its full sequence is Aconitate hydratase A (961 aa).

[4Fe-4S] cluster contacts are provided by Cys-499, Cys-565, and Cys-568.

This sequence belongs to the aconitase/IPM isomerase family. As to quaternary structure, monomer. [4Fe-4S] cluster is required as a cofactor.

The catalysed reaction is citrate = D-threo-isocitrate. It catalyses the reaction (2S,3R)-3-hydroxybutane-1,2,3-tricarboxylate = 2-methyl-cis-aconitate + H2O. It participates in carbohydrate metabolism; tricarboxylic acid cycle; isocitrate from oxaloacetate: step 2/2. The protein operates within organic acid metabolism; propanoate degradation. Its function is as follows. Involved in the catabolism of short chain fatty acids (SCFA) via the tricarboxylic acid (TCA)(acetyl degradation route) and probably via the 2-methylcitrate cycle I (propionate degradation route). Catalyzes the reversible isomerization of citrate to isocitrate via cis-aconitate. The apo form of AcnA functions as a RNA-binding regulatory protein. Could catalyze the hydration of 2-methyl-cis-aconitate to yield (2R,3S)-2-methylisocitrate. The protein is Aconitate hydratase A (acn) of Mycobacterium avium.